The primary structure comprises 584 residues: A-type ATP synthase subunit A 2 (584 aa).

Position 227–234 (227–234) interacts with ATP; the sequence is GGFGTGKT.

The protein belongs to the ATPase alpha/beta chains family. Has multiple subunits with at least A(3), B(3), C, D, E, F, H, I and proteolipid K(x).

The protein resides in the cell membrane. The catalysed reaction is ATP + H2O + 4 H(+)(in) = ADP + phosphate + 5 H(+)(out). Its function is as follows. Component of the A-type ATP synthase that produces ATP from ADP in the presence of a proton gradient across the membrane. The A chain is the catalytic subunit. The chain is A-type ATP synthase subunit A 2 from Methanospirillum hungatei JF-1 (strain ATCC 27890 / DSM 864 / NBRC 100397 / JF-1).